The following is a 120-amino-acid chain: Large ribosomal subunit protein eL18 (120 aa).

The protein belongs to the eukaryotic ribosomal protein eL18 family.

The chain is Large ribosomal subunit protein eL18 from Thermoplasma acidophilum (strain ATCC 25905 / DSM 1728 / JCM 9062 / NBRC 15155 / AMRC-C165).